The primary structure comprises 336 residues: USG-1 protein homolog (336 aa).

It belongs to the aspartate-semialdehyde dehydrogenase family.

This Pseudomonas aeruginosa (strain ATCC 15692 / DSM 22644 / CIP 104116 / JCM 14847 / LMG 12228 / 1C / PRS 101 / PAO1) protein is USG-1 protein homolog (usg).